A 376-amino-acid polypeptide reads, in one-letter code: Carbohydrate sulfotransferase 14 (376 aa).

A disordered region spans residues 1–30 (MFPRPLTPLAAPKSAETLGRTPRRAPLGRA). Over 1–39 (MFPRPLTPLAAPKSAETLGRTPRRAPLGRARAGLGGPPL) the chain is Cytoplasmic. Residues 18 to 30 (LGRTPRRAPLGRA) show a composition bias toward low complexity. A helical; Signal-anchor for type II membrane protein membrane pass occupies residues 40–60 (LLPSMLMFAVIVASSGLLLMI). Residues 61–376 (ERGILSEMKP…PNVTKEACHQ (316 aa)) are Lumenal-facing. A disordered region spans residues 76-96 (PSHKGAAWSGTDPKPRGLSLD). Asparagine 110 carries an N-linked (GlcNAc...) asparagine glycan. Residues 155–161 (PKVACSN) and 213–221 (RDPLERLLS) contribute to the 3'-phosphoadenylyl sulfate site. N-linked (GlcNAc...) asparagine glycosylation is present at asparagine 368.

This sequence belongs to the sulfotransferase 2 family.

It is found in the golgi apparatus membrane. It catalyses the reaction dermatan + n 3'-phosphoadenylyl sulfate = dermatan 4'-sulfate + n adenosine 3',5'-bisphosphate + n H(+). Its function is as follows. Catalyzes the transfer of sulfate to position 4 of the N-acetylgalactosamine (GalNAc) residue of dermatan sulfate. Plays a pivotal role in the formation of 4-0-sulfated IdoA blocks in dermatan sulfate. Transfers sulfate to the C-4 hydroxyl of beta1,4-linked GalNAc that is substituted with an alpha-linked iduronic acid (IdoUA) at the C-3 hydroxyl. Transfers sulfate more efficiently to GalNAc residues in -IdoUA-GalNAc-IdoUA- than in -GlcUA-GalNAc-GlcUA-sequences. Has preference for partially desulfated dermatan sulfate. Addition of sulfate to GalNAc may occur immediately after epimerization of GlcUA to IdoUA. Appears to have an important role in the formation of the cerebellar neural network during postnatal brain development. The protein is Carbohydrate sulfotransferase 14 (Chst14) of Mus musculus (Mouse).